A 297-amino-acid polypeptide reads, in one-letter code: Homoserine kinase (297 aa).

Pro79–Ala89 is a binding site for ATP.

It belongs to the GHMP kinase family. Homoserine kinase subfamily.

It is found in the cytoplasm. It carries out the reaction L-homoserine + ATP = O-phospho-L-homoserine + ADP + H(+). It participates in amino-acid biosynthesis; L-threonine biosynthesis; L-threonine from L-aspartate: step 4/5. In terms of biological role, catalyzes the ATP-dependent phosphorylation of L-homoserine to L-homoserine phosphate. The polypeptide is Homoserine kinase (Pyrobaculum neutrophilum (strain DSM 2338 / JCM 9278 / NBRC 100436 / V24Sta) (Thermoproteus neutrophilus)).